The primary structure comprises 102 residues: Small ribosomal subunit protein uS10 (102 aa).

Belongs to the universal ribosomal protein uS10 family. Part of the 30S ribosomal subunit.

Functionally, involved in the binding of tRNA to the ribosomes. In Akkermansia muciniphila (strain ATCC BAA-835 / DSM 22959 / JCM 33894 / BCRC 81048 / CCUG 64013 / CIP 107961 / Muc), this protein is Small ribosomal subunit protein uS10.